The chain runs to 85 residues: Putative membrane protein insertion efficiency factor (85 aa).

Belongs to the UPF0161 family.

Its subcellular location is the cell inner membrane. Could be involved in insertion of integral membrane proteins into the membrane. In Shewanella woodyi (strain ATCC 51908 / MS32), this protein is Putative membrane protein insertion efficiency factor.